The primary structure comprises 807 residues: uncharacterized protein (807 aa).

The region spanning 281–566 (IIQSLKSEEF…DKILFLGTNI (286 aa)) is the Reverse transcriptase domain.

Its subcellular location is the mitochondrion. This is an uncharacterized protein from Schizosaccharomyces pombe (strain 972 / ATCC 24843) (Fission yeast).